Consider the following 160-residue polypeptide: Transcription elongation factor GreA (160 aa).

It belongs to the GreA/GreB family.

Functionally, necessary for efficient RNA polymerase transcription elongation past template-encoded arresting sites. The arresting sites in DNA have the property of trapping a certain fraction of elongating RNA polymerases that pass through, resulting in locked ternary complexes. Cleavage of the nascent transcript by cleavage factors such as GreA or GreB allows the resumption of elongation from the new 3'terminus. GreA releases sequences of 2 to 3 nucleotides. In Francisella philomiragia subsp. philomiragia (strain ATCC 25017 / CCUG 19701 / FSC 153 / O#319-036), this protein is Transcription elongation factor GreA.